Consider the following 440-residue polypeptide: Proline--tRNA ligase (440 aa).

Belongs to the class-II aminoacyl-tRNA synthetase family. ProS type 2 subfamily. Homodimer.

The protein localises to the cytoplasm. It catalyses the reaction tRNA(Pro) + L-proline + ATP = L-prolyl-tRNA(Pro) + AMP + diphosphate. Its function is as follows. Catalyzes the attachment of proline to tRNA(Pro) in a two-step reaction: proline is first activated by ATP to form Pro-AMP and then transferred to the acceptor end of tRNA(Pro). This chain is Proline--tRNA ligase, found in Rhizobium johnstonii (strain DSM 114642 / LMG 32736 / 3841) (Rhizobium leguminosarum bv. viciae).